A 69-amino-acid polypeptide reads, in one-letter code: MSKLGVVLFVFLLLLPLAAPQPVGDQPADQPADRNAEARGTYLYPFSYYRLWRYFTRFLHKQPYYYVHI.

The N-terminal stretch at 1–20 is a signal peptide; the sequence is MSKLGVVLFVFLLLLPLAAP. A propeptide spanning residues 21–69 is cleaved from the precursor; it reads QPVGDQPADQPADRNAEARGTYLYPFSYYRLWRYFTRFLHKQPYYYVHI.

The protein belongs to the conotoxin M superfamily. Conopeptide Y family. As to expression, expressed by the venom duct.

The protein resides in the secreted. Its function is as follows. Tyrosine-rich conopeptide that specifically targets voltage-gated potassium channel Kv1.6/KCNA6 (IC(50) is 8.8 uM) that is expressed in Xenopus oocytes. In vivo, causes seizures (at 5 nmol) and death (20 nmol) when intracranially injected into mice, and causes paralysis (at 10 pmol) to C.elegans. The chain is Conopeptide Y-Fe1 from Conus ferrugineus (Cone snail).